The following is a 351-amino-acid chain: Putative [LysW]-L-2-aminoadipate/[LysW]-L-glutamate phosphate reductase (351 aa).

Residues 10 to 13 and 34 to 36 each bind NADP(+); these read SGFT and SRK. The active site involves C151. Position 318 (N318) interacts with NADP(+).

It belongs to the NAGSA dehydrogenase family. Type 1 subfamily. LysY sub-subfamily.

It is found in the cytoplasm. The enzyme catalyses [amino-group carrier protein]-C-terminal-N-(1-carboxy-5-oxopentan-1-yl)-L-glutamine + phosphate + NADP(+) = [amino-group carrier protein]-C-terminal-N-(1-carboxy-5-phosphooxy-5-oxopentan-1-yl)-L-glutamine + NADPH + H(+). It catalyses the reaction [amino-group carrier protein]-C-terminal-gamma-(L-glutamyl-5-semialdehyde)-L-glutamate + phosphate + NADP(+) = [amino-group carrier protein]-C-terminal-gamma-(5-phospho-L-glutamyl)-L-glutamate + NADPH + H(+). Its pathway is amino-acid biosynthesis; L-lysine biosynthesis via AAA pathway; L-lysine from L-alpha-aminoadipate (Thermus route): step 3/5. It participates in amino-acid biosynthesis; L-arginine biosynthesis. Involved in both the arginine and lysine biosynthetic pathways. This chain is Putative [LysW]-L-2-aminoadipate/[LysW]-L-glutamate phosphate reductase, found in Pyrobaculum calidifontis (strain DSM 21063 / JCM 11548 / VA1).